We begin with the raw amino-acid sequence, 716 residues long: Epidermal growth factor receptor kinase substrate 8-like protein 2 (716 aa).

Disordered stretches follow at residues 1 to 25 (MSQS…DGVA) and 182 to 243 (PQTL…SQEE). The PID domain occupies 46–202 (MHETSQYHVQ…RQRQSILPPP (157 aa)). Residues 199–208 (LPPPQGPAPI) show a composition bias toward pro residues. A compositionally biased stretch (basic and acidic residues) spans 234–243 (GFRRRESQEE). Serine 240 carries the post-translational modification Phosphoserine. Threonine 304 carries the post-translational modification Phosphothreonine. Residues 449-488 (VSPVSRQSIRNSQKHSPTSEPTPPGDALPPVSSPHTHRGY) are disordered. Serine 450 is subject to Phosphoserine. Over residues 452–467 (VSRQSIRNSQKHSPTS) the composition is skewed to polar residues. Threonine 470 bears the Phosphothreonine mark. The SH3 domain occupies 493-552 (AMAKYVKILYDFTARNANELSVLKDEVLEVLEDGRQWWKLRSRSGQAGYVPCNILGEARP). The residue at position 571 (serine 571) is a Phosphoserine.

Belongs to the EPS8 family. Interacts with ABI1. Part of a complex that contains SOS1, ABI1 and EPS8L2. Associates with F-actin.

The protein localises to the cytoplasm. It localises to the cell projection. Its subcellular location is the stereocilium. In terms of biological role, stimulates guanine exchange activity of SOS1. May play a role in membrane ruffling and remodeling of the actin cytoskeleton. In the cochlea, is required for stereocilia maintenance in adult hair cells. In Pongo abelii (Sumatran orangutan), this protein is Epidermal growth factor receptor kinase substrate 8-like protein 2 (EPS8L2).